The sequence spans 291 residues: Protease HtpX homolog (291 aa).

2 helical membrane passes run 4 to 24 (ILLFILTNVAVVAVLGIVASL) and 39 to 59 (SALLGFALIMGFGGAIISLLI). Residue histidine 144 coordinates Zn(2+). Glutamate 145 is an active-site residue. Residue histidine 148 coordinates Zn(2+). The next 2 helical transmembrane spans lie at 159 to 179 (LIQGVMNTFVVFLSRVIGYAV) and 199 to 219 (VSTIVLDIVLGFAAAIVVAWF). Glutamate 224 lines the Zn(2+) pocket.

It belongs to the peptidase M48B family. Zn(2+) is required as a cofactor.

It localises to the cell inner membrane. This is Protease HtpX homolog from Polaromonas naphthalenivorans (strain CJ2).